Here is a 255-residue protein sequence, read N- to C-terminus: 5-oxoprolinase subunit A (255 aa).

It belongs to the LamB/PxpA family. In terms of assembly, forms a complex composed of PxpA, PxpB and PxpC.

It catalyses the reaction 5-oxo-L-proline + ATP + 2 H2O = L-glutamate + ADP + phosphate + H(+). Its function is as follows. Catalyzes the cleavage of 5-oxoproline to form L-glutamate coupled to the hydrolysis of ATP to ADP and inorganic phosphate. This chain is 5-oxoprolinase subunit A, found in Pyrococcus horikoshii (strain ATCC 700860 / DSM 12428 / JCM 9974 / NBRC 100139 / OT-3).